The chain runs to 322 residues: Carnosine N-methyltransferase 2 (322 aa).

E58 lines the substrate pocket. G90, E119, S150, and I172 together coordinate S-adenosyl-L-methionine. Residue N313 participates in substrate binding.

Belongs to the class I-like SAM-binding methyltransferase superfamily. HNMT family. As to quaternary structure, monomer.

It catalyses the reaction carnosine + S-adenosyl-L-methionine = anserine + S-adenosyl-L-homocysteine + H(+). N-methyltransferase that mediates the formation of anserine (beta-alanyl-N(Pi)-methyl-L-histidine) from carnosine. Anserine, a methylated derivative of carnosine (beta-alanyl-L-histidine), is an abundant constituent of vertebrate skeletal muscles. The sequence is that of Carnosine N-methyltransferase 2 from Gallus gallus (Chicken).